The sequence spans 1000 residues: Vacuolar protein-sorting protein bro1 (1000 aa).

The 402-residue stretch at 5–406 folds into the BRO1 domain; sequence PMISCPLKQT…EKVETADGEM (402 aa). The stretch at 732–793 forms a coiled coil; it reads YAEMTETVDS…RQLMERLSTE (62 aa). Disordered regions lie at residues 760–857 and 891–1000; these read LLGQ…PYSQ and PIPA…NAWK. Residues 764 to 792 show a composition bias toward basic and acidic residues; that stretch reads IEREKAAGTSDHEEREREKLRQLMERLST. Positions 840 to 849 are enriched in polar residues; the sequence is VPQQHGTPVS. Pro residues-rich tracts occupy residues 898–922 and 931–954; these read SPPPSQPFYSPTPTPFYTSPTPPVP and YVPPPPPPRPQQPTYPPSTGPFPS. The segment covering 981 to 991 has biased composition (polar residues); the sequence is TGPSVSANSSD.

This sequence belongs to the BRO1 family.

The protein localises to the cytoplasm. It is found in the endosome. Functionally, involved in concentration and sorting of cargo proteins of the multivesicular body (MVB) for incorporation into intralumenal vesicles. This Emericella nidulans (strain FGSC A4 / ATCC 38163 / CBS 112.46 / NRRL 194 / M139) (Aspergillus nidulans) protein is Vacuolar protein-sorting protein bro1 (broA).